The sequence spans 457 residues: Putative HD domain-containing protein L394 (457 aa).

Positions 65–206 (RLEHSIGVYD…GIDVDKFDYL (142 aa)) constitute an HD domain.

The polypeptide is Putative HD domain-containing protein L394 (Acanthamoeba polyphaga mimivirus (APMV)).